The chain runs to 126 residues: SPbeta prophage-derived uncharacterized protein YorC (126 aa).

The sequence is that of SPbeta prophage-derived uncharacterized protein YorC (yorC) from Bacillus subtilis (strain 168).